Consider the following 44-residue polypeptide: DNA-directed RNA polymerase subunit Rpo12 (44 aa).

Residues Cys8, Cys22, and Cys25 each coordinate Zn(2+).

It belongs to the archaeal Rpo12/eukaryotic RPC10 RNA polymerase subunit family. As to quaternary structure, part of the RNA polymerase complex. The cofactor is Zn(2+).

It is found in the cytoplasm. It catalyses the reaction RNA(n) + a ribonucleoside 5'-triphosphate = RNA(n+1) + diphosphate. Functionally, DNA-dependent RNA polymerase (RNAP) catalyzes the transcription of DNA into RNA using the four ribonucleoside triphosphates as substrates. This chain is DNA-directed RNA polymerase subunit Rpo12, found in Halobacterium salinarum (strain ATCC 29341 / DSM 671 / R1).